Consider the following 313-residue polypeptide: 3'-5' exoribonuclease YhaM (313 aa).

The OB DNA-binding region spans 22–90 (SSVKGTASNG…QLKIRQIRQA (69 aa)). One can recognise an HD domain in the interval 163 to 279 (HVVSMLRLAK…LHQIDLMDAS (117 aa)).

This sequence belongs to the YhaM family.

Shows a 3'-5' exoribonuclease activity. In Listeria innocua serovar 6a (strain ATCC BAA-680 / CLIP 11262), this protein is 3'-5' exoribonuclease YhaM.